Reading from the N-terminus, the 366-residue chain is Acetylserotonin O-methyltransferase 2 (366 aa).

Residues Gly-209, Asp-232, Asp-253, and Lys-267 each coordinate S-adenosyl-L-homocysteine. The Proton acceptor role is filled by His-271. Active-site residues include Glu-302 and Glu-332.

The protein belongs to the class I-like SAM-binding methyltransferase superfamily. Cation-independent O-methyltransferase family. Homodimer. As to expression, expressed in roots, leaves, stems and flowers.

It is found in the cytoplasm. The catalysed reaction is N-acetylserotonin + S-adenosyl-L-methionine = melatonin + S-adenosyl-L-homocysteine + H(+). Its pathway is aromatic compound metabolism; melatonin biosynthesis; melatonin from serotonin: step 1/2. Its function is as follows. Methyltransferase which catalyzes the transfer of a methyl group onto N-acetylserotonin, producing melatonin (N-acetyl-5-methoxytryptamine). The sequence is that of Acetylserotonin O-methyltransferase 2 from Oryza sativa subsp. japonica (Rice).